Here is a 156-residue protein sequence, read N- to C-terminus: Small ribosomal subunit protein uS7 (156 aa).

Belongs to the universal ribosomal protein uS7 family. As to quaternary structure, part of the 30S ribosomal subunit. Contacts proteins S9 and S11.

Its function is as follows. One of the primary rRNA binding proteins, it binds directly to 16S rRNA where it nucleates assembly of the head domain of the 30S subunit. Is located at the subunit interface close to the decoding center, probably blocks exit of the E-site tRNA. This chain is Small ribosomal subunit protein uS7, found in Clostridium novyi (strain NT).